The sequence spans 94 residues: Co-chaperonin GroES (94 aa).

This sequence belongs to the GroES chaperonin family. As to quaternary structure, heptamer of 7 subunits arranged in a ring. Interacts with the chaperonin GroEL.

Its subcellular location is the cytoplasm. Together with the chaperonin GroEL, plays an essential role in assisting protein folding. The GroEL-GroES system forms a nano-cage that allows encapsulation of the non-native substrate proteins and provides a physical environment optimized to promote and accelerate protein folding. GroES binds to the apical surface of the GroEL ring, thereby capping the opening of the GroEL channel. In Exiguobacterium sp. (strain ATCC BAA-1283 / AT1b), this protein is Co-chaperonin GroES.